The sequence spans 742 residues: Glucosylceramidase (742 aa).

N-linked (GlcNAc...) asparagine glycosylation is found at N37 and N160. E258 (proton donor) is an active-site residue. N-linked (GlcNAc...) asparagine glycosylation occurs at N388. The active-site Nucleophile is E492. 3 N-linked (GlcNAc...) asparagine glycosylation sites follow: N552, N560, and N698. The chain crosses the membrane as a helical span at residues 701–721 (IAQILVAVVILLLGVLVAYYA).

Belongs to the glycosyl hydrolase 5 (cellulase A) family.

The protein resides in the membrane. It catalyses the reaction a beta-D-glucosyl-(1&lt;-&gt;1')-N-acylsphing-4-enine + H2O = an N-acylsphing-4-enine + D-glucose. Specifically hydrolyzes the glucosidic linkage in glucosylceramide. May prevent accumulation of aberrent glucosylceramide containing immature ceramide. In Cryptococcus neoformans var. grubii serotype A (strain H99 / ATCC 208821 / CBS 10515 / FGSC 9487) (Filobasidiella neoformans var. grubii), this protein is Glucosylceramidase.